A 402-amino-acid chain; its full sequence is Argininosuccinate synthase (402 aa).

Residues 13–21 (AYSGGLDTS) and A40 contribute to the ATP site. 2 residues coordinate L-citrulline: Y91 and S96. An ATP-binding site is contributed by G121. The L-aspartate site is built by T123, N127, and D128. N127 contributes to the L-citrulline binding site. L-citrulline contacts are provided by R131, S180, S189, E265, and Y277.

This sequence belongs to the argininosuccinate synthase family. Type 1 subfamily. In terms of assembly, homotetramer.

Its subcellular location is the cytoplasm. The enzyme catalyses L-citrulline + L-aspartate + ATP = 2-(N(omega)-L-arginino)succinate + AMP + diphosphate + H(+). It functions in the pathway amino-acid biosynthesis; L-arginine biosynthesis; L-arginine from L-ornithine and carbamoyl phosphate: step 2/3. In Leptospira biflexa serovar Patoc (strain Patoc 1 / Ames), this protein is Argininosuccinate synthase.